Reading from the N-terminus, the 380-residue chain is Homoserine O-acetyltransferase (380 aa).

An AB hydrolase-1 domain is found at N70–I366. The Nucleophile role is filled by S186. R250 is a substrate binding site. Catalysis depends on residues D333 and H361. Position 362 (D362) interacts with substrate.

Belongs to the AB hydrolase superfamily. MetX family. In terms of assembly, homodimer.

The protein resides in the cytoplasm. The catalysed reaction is L-homoserine + acetyl-CoA = O-acetyl-L-homoserine + CoA. The protein operates within amino-acid biosynthesis; L-methionine biosynthesis via de novo pathway; O-acetyl-L-homoserine from L-homoserine: step 1/1. In terms of biological role, transfers an acetyl group from acetyl-CoA to L-homoserine, forming acetyl-L-homoserine. The chain is Homoserine O-acetyltransferase from Thermus thermophilus (strain ATCC BAA-163 / DSM 7039 / HB27).